We begin with the raw amino-acid sequence, 239 residues long: Increased recombination centers protein 22-2 (239 aa).

A signal peptide spans 1–19 (MKLSTIFTAFAATIATVAG). Residues 20-161 (YETTGSKQTV…AAVSFFDPRL (142 aa)) lie on the Lumenal side of the membrane. Residues 162 to 182 (IFLELVLLITFAGLIYVGYEI) form a helical membrane-spanning segment. The Cytoplasmic segment spans residues 183 to 239 (WGKQYFKGVAPVKAKKVSAAKASSPVATGPSTTSATGYDTNWIPESHLKQKKTKKVN). Positions 202-222 (AKASSPVATGPSTTSATGYDT) are disordered. Residues 211–221 (GPSTTSATGYD) show a composition bias toward polar residues.

The protein belongs to the IRC22 family.

Its subcellular location is the endoplasmic reticulum membrane. In terms of biological role, is probably involved in a pathway contributing to genomic integrity. This is Increased recombination centers protein 22-2 (IRC22-2) from Candida albicans (strain SC5314 / ATCC MYA-2876) (Yeast).